The primary structure comprises 86 residues: MDAFDVIKTPIVSEKTMKLIEEENRLVFYVERKATKADVRAAIKELFDAEVADINTSITPKGKKKAYITLKDEYNAGEVAASLGIY.

Belongs to the universal ribosomal protein uL23 family. In terms of assembly, part of the 50S ribosomal subunit. Contacts protein L29.

Functionally, binds to 23S rRNA. One of the proteins that surrounds the polypeptide exit tunnel on the outside of the ribosome. The sequence is that of Large ribosomal subunit protein uL23 from Methanococcus maripaludis (strain DSM 14266 / JCM 13030 / NBRC 101832 / S2 / LL).